The following is a 289-amino-acid chain: G1/S-specific cyclin-D2 (289 aa).

The 126-residue stretch at 26–151 folds into the Cyclin N-terminal domain; it reads LQNLLTIEER…VLGKLKWNLA (126 aa). The interval 264–289 is disordered; that stretch reads QHNAGSKSVEDPDQATTPTDVRDVDL. S271 carries the post-translational modification Phosphoserine. A Phosphothreonine modification is found at T280.

This sequence belongs to the cyclin family. Cyclin D subfamily. In terms of assembly, interacts with either CDK4 or CDK6 protein kinase to form a serine/threonine kinase holoenzyme complex. The cyclin subunit imparts substrate specificity to the complex. Phosphorylation at Thr-280 by MAP kinases is required for ubiquitination and degradation by the DCX(AMBRA1) complex. In terms of processing, ubiquitinated by the DCX(AMBRA1) complex during the transition from G1 to S cell phase, leading to its degradation: ubiquitination is dependent on Thr-280 phosphorylation. The DCX(AMBRA1) complex represents the major regulator of CCND2 stability during the G1/S transition. Polyubiquitinated by the SCF(FBXL2) complex, leading to proteasomal degradation.

It localises to the nucleus. It is found in the cytoplasm. The protein resides in the nucleus membrane. Functionally, regulatory component of the cyclin D2-CDK4 (DC) complex that phosphorylates and inhibits members of the retinoblastoma (RB) protein family including RB1 and regulates the cell-cycle during G(1)/S transition. Phosphorylation of RB1 allows dissociation of the transcription factor E2F from the RB/E2F complex and the subsequent transcription of E2F target genes which are responsible for the progression through the G(1) phase. Hypophosphorylates RB1 in early G(1) phase. Cyclin D-CDK4 complexes are major integrators of various mitogenenic and antimitogenic signals. The sequence is that of G1/S-specific cyclin-D2 from Mus musculus (Mouse).